The chain runs to 31 residues: Cytochrome b6-f complex subunit 6 (31 aa).

Residues 4 to 24 (ITSYFGFLLAALTITPALFIG) form a helical membrane-spanning segment.

Belongs to the PetL family. In terms of assembly, the 4 large subunits of the cytochrome b6-f complex are cytochrome b6, subunit IV (17 kDa polypeptide, PetD), cytochrome f and the Rieske protein, while the 4 small subunits are PetG, PetL, PetM and PetN. The complex functions as a dimer.

The protein localises to the plastid. It is found in the chloroplast thylakoid membrane. Its function is as follows. Component of the cytochrome b6-f complex, which mediates electron transfer between photosystem II (PSII) and photosystem I (PSI), cyclic electron flow around PSI, and state transitions. PetL is important for photoautotrophic growth as well as for electron transfer efficiency and stability of the cytochrome b6-f complex. This Saccharum barberi (Indian sugarcane) protein is Cytochrome b6-f complex subunit 6.